The chain runs to 112 residues: UPF0102 protein CHAB381_0216 (112 aa).

Belongs to the UPF0102 family.

This is UPF0102 protein CHAB381_0216 from Campylobacter hominis (strain ATCC BAA-381 / DSM 21671 / CCUG 45161 / LMG 19568 / NCTC 13146 / CH001A).